The sequence spans 115 residues: ATP synthase subunit g, mitochondrial (115 aa).

The residue at position 1 (Met-1) is an N-acetylmethionine. Residues Ser-3 and Ser-62 each carry the phosphoserine modification.

It belongs to the ATPase g subunit family. In terms of assembly, F-type ATPases have 2 components, CF(1) - the catalytic core - and CF(0) - the membrane proton channel. In yeast, the dimeric form of ATP synthase consists of 17 polypeptides: alpha, beta, gamma, delta, epsilon, 4 (B), 5 (OSCP), 6 (A), 8, 9 (C), d, E (Tim11), f, g, h, i/j and k. In terms of processing, phosphorylation on Ser-62 impairs ATP synthase dimerization.

Its subcellular location is the mitochondrion membrane. Its function is as follows. Mitochondrial membrane ATP synthase (F(1)F(0) ATP synthase or Complex V) produces ATP from ADP in the presence of a proton gradient across the membrane which is generated by electron transport complexes of the respiratory chain. F-type ATPases consist of two structural domains, F(1) - containing the extramembraneous catalytic core, and F(0) - containing the membrane proton channel, linked together by a central stalk and a peripheral stalk. During catalysis, ATP synthesis in the catalytic domain of F(1) is coupled via a rotary mechanism of the central stalk subunits to proton translocation. Part of the complex F(0) domain. Minor subunit located with subunit a in the membrane. The sequence is that of ATP synthase subunit g, mitochondrial (ATP20) from Saccharomyces cerevisiae (strain ATCC 204508 / S288c) (Baker's yeast).